An 80-amino-acid chain; its full sequence is MSQEEILQKVCSIVSEQLSVESGEVKSDSNFQNDLGADSLDTVELVMALEEAFDIEIPDEAAEGIATVGDAVKFIEAKKG.

In terms of domain architecture, Carrier spans 1–79 (MSQEEILQKV…DAVKFIEAKK (79 aa)). O-(pantetheine 4'-phosphoryl)serine is present on S39.

This sequence belongs to the acyl carrier protein (ACP) family. Post-translationally, 4'-phosphopantetheine is transferred from CoA to a specific serine of apo-ACP by AcpS. This modification is essential for activity because fatty acids are bound in thioester linkage to the sulfhydryl of the prosthetic group.

The protein resides in the cytoplasm. It functions in the pathway lipid metabolism; fatty acid biosynthesis. Carrier of the growing fatty acid chain in fatty acid biosynthesis. In Prochlorococcus marinus (strain MIT 9515), this protein is Acyl carrier protein.